Reading from the N-terminus, the 121-residue chain is MMTLSPFLLLLIAAVVIGNASEGEVKNEFEERLKDEFKDPSRSEVAEVILLRELEVLEETLFGKEMTSDTEENRNSREKRCMGYDIECNENLPCCKHRKLECVETSGYWWYKRKYCRPIKG.

An N-terminal signal peptide occupies residues 1–20 (MMTLSPFLLLLIAAVVIGNA). Residues 21-80 (SEGEVKNEFEERLKDEFKDPSRSEVAEVILLRELEVLEETLFGKEMTSDTEENRNSREKR) constitute a propeptide that is removed on maturation. 3 disulfide bridges follow: C81–C95, C88–C102, and C94–C116. K120 is modified (lysine amide).

Belongs to the neurotoxin 14 (magi-1) family. 09 (magi-1) subfamily. In terms of tissue distribution, expressed by the venom gland.

It is found in the secreted. Its function is as follows. Insecticidal neurotoxin. Shows competition for site 3 of insect voltage-gated sodium channels (Nav). Induces flaccid paralysis when injected into lepidopteran larvae. Is not toxic to mice when injected intracranially at 20 pmol/g. In Macrothele gigas (Japanese funnel web spider), this protein is Mu-hexatoxin-Mg1a.